We begin with the raw amino-acid sequence, 198 residues long: Holliday junction branch migration complex subunit RuvA (198 aa).

The tract at residues 1–63 (MYDYIKGQLT…EDAQLLFGFH (63 aa)) is domain I. A domain II region spans residues 64–142 (SEEEKDVFLK…EAPKEESSKP (79 aa)). The tract at residues 143–147 (PKAKQ) is flexible linker. Positions 148-198 (QGNEQLDEAVEALLALGYKATELKKIRAFFEGTSETAEQYIKSALKMLMKG) are domain III.

This sequence belongs to the RuvA family. Homotetramer. Forms an RuvA(8)-RuvB(12)-Holliday junction (HJ) complex. HJ DNA is sandwiched between 2 RuvA tetramers; dsDNA enters through RuvA and exits via RuvB. An RuvB hexamer assembles on each DNA strand where it exits the tetramer. Each RuvB hexamer is contacted by two RuvA subunits (via domain III) on 2 adjacent RuvB subunits; this complex drives branch migration. In the full resolvosome a probable DNA-RuvA(4)-RuvB(12)-RuvC(2) complex forms which resolves the HJ.

Its subcellular location is the cytoplasm. Its function is as follows. The RuvA-RuvB-RuvC complex processes Holliday junction (HJ) DNA during genetic recombination and DNA repair, while the RuvA-RuvB complex plays an important role in the rescue of blocked DNA replication forks via replication fork reversal (RFR). RuvA specifically binds to HJ cruciform DNA, conferring on it an open structure. The RuvB hexamer acts as an ATP-dependent pump, pulling dsDNA into and through the RuvAB complex. HJ branch migration allows RuvC to scan DNA until it finds its consensus sequence, where it cleaves and resolves the cruciform DNA. This chain is Holliday junction branch migration complex subunit RuvA, found in Streptococcus equi subsp. equi (strain 4047).